A 227-amino-acid chain; its full sequence is (S)-2-haloacid dehalogenase (227 aa).

Asp10 functions as the Nucleophile in the catalytic mechanism. An (S)-2-haloacid contacts are provided by residues Leu11 to Tyr12, Arg41, and Ser118 to Asn119. Positions Ser175–Asp180 are important for catalytic activity.

Belongs to the HAD-like hydrolase superfamily. S-2-haloalkanoic acid dehalogenase family.

It carries out the reaction an (S)-2-haloacid + H2O = a (2R)-2-hydroxycarboxylate + a halide anion + H(+). The catalysed reaction is (S)-2-chloropropanoate + H2O = (R)-lactate + chloride + H(+). Catalyzes the hydrolytic dehalogenation of small (S)-2-haloalkanoic acids to yield the corresponding (R)-2-hydroxyalkanoic acids. Acts on acids of short chain lengths, C(2) to C(4), with inversion of configuration at C-2. Active with 2-halogenated carboxylic acids and converts only the S-isomer (or L-isomer) of 2-chloropropionic acid with inversion of configuration to produce R-lactate (or D-isomer). The sequence is that of (S)-2-haloacid dehalogenase (dhl VII) from Pseudomonas fluorescens.